The sequence spans 365 residues: Dehydroprecondylocarpine acetate synthase (365 aa).

4 residues coordinate Zn(2+): Cys105, Cys108, Cys111, and Cys119. 2 N-linked (GlcNAc...) asparagine glycosylation sites follow: Asn142 and Asn147. NADP(+) is bound by residues Leu194, Gly196, Leu197, Ser216, Thr217, Thr218, Lys221, Leu279, Ala281, Ser303, Ala305, and Arg350.

Belongs to the zinc-containing alcohol dehydrogenase family. In terms of assembly, homodimer. Interaction with catharanthine synthase (CS) and tabersonine synthase (TS). Zn(2+) serves as cofactor.

It localises to the cytoplasm. The protein resides in the cytosol. The enzyme catalyses dihydroprecondylocarpine acetate + NADP(+) = precondylocarpine acetate + NADPH + H(+). It participates in alkaloid biosynthesis. In terms of biological role, component of the seco-iridoid and derivatives monoterpenoid indole alkaloids (MIAs, e.g. vinblastine, catharanthine, tabersonine, vincadifformine, vindoline, vincristine, quinine and strychnine) biosynthesis pathway. Catalyzes the non-canonical 1,4-reduction of an alpha,beta-unsaturated iminium moiety; by contrast with the classic alcohol dehydrogenase mechanism, this reaction does not require a catalytic zinc or proton relay. Converts precondylocarpine acetate to dihydroprecondylocarpine acetate, that is spontaneously converted into dehydrosecodine intermediate, precursor of angryline. May also trigger the non-stereoselective 1,4-reduction reaction at C15 of dehydrosecodine leading to the production of secodine, a precursor of vincadifformine. This Catharanthus roseus (Madagascar periwinkle) protein is Dehydroprecondylocarpine acetate synthase.